An 876-amino-acid polypeptide reads, in one-letter code: GRB2-associated and regulator of MAPK protein (876 aa).

Residues 12-320 (KDVKWSPVAM…HQVKGDMWPE (309 aa)) are CABIT. A Phosphotyrosine modification is found at Tyr105. Positions 427–448 (GDSGSDYLFPEANEESAGIPGK) are disordered. Tyr453 carries the post-translational modification Phosphotyrosine. 2 disordered regions span residues 460 to 501 (EGKP…ATLG) and 530 to 572 (LNAP…SYYS). Residues 498-550 (ATLGATIKSSEIALPPPPVPPKSEAVREECRLLNAPPVPPRSAKPLSTSPSIP) form a necessary for interaction with GRB2 region. Positions 560-572 (QTRSPSPTLSYYS) are enriched in polar residues. 2 positions are modified to phosphoserine: Ser609 and Ser613. 2 stretches are compositionally biased toward polar residues: residues 630-639 (SGASENQTRS) and 647-657 (RSYSYPRQKTP). Disordered regions lie at residues 630–664 (SGASENQTRSDFLLDPSRSYSYPRQKTPGTPKRTC) and 722–759 (CPALPPRAPKPVEQKATPETSPLPLKIDGAEEDPTAGS). In terms of domain architecture, SAM spans 811–876 (LSIEEVSKSL…QFINGWRPKI (66 aa)).

Belongs to the GAREM family. As to quaternary structure, interacts with EGFR. Interacts (via proline-rich domain and phosphorylated at Tyr-105 and Tyr-453) with GRB2 (via SH3 domains); the interaction occurs upon EGF stimulation. Interacts (phosphorylated at Tyr-453) with PTPN11; the interaction increases MAPK/ERK activity and does not affect the GRB2/SOS complex formation. In terms of processing, on EGF stimulation, phosphorylated on Tyr-105 and Tyr-453.

Its function is as follows. Acts as an adapter protein that plays a role in intracellular signaling cascades triggered either by the cell surface activated epidermal growth factor receptor and/or cytoplasmic protein tyrosine kinases. Promotes activation of the MAPK/ERK signaling pathway. Plays a role in the regulation of cell proliferation. This is GRB2-associated and regulator of MAPK protein (Garem1) from Mus musculus (Mouse).